The chain runs to 188 residues: Transcription factor FapR (188 aa).

Belongs to the FapR family.

Functionally, transcriptional factor involved in regulation of membrane lipid biosynthesis by repressing genes involved in fatty acid and phospholipid metabolism. The polypeptide is Transcription factor FapR (Bacillus velezensis (strain DSM 23117 / BGSC 10A6 / LMG 26770 / FZB42) (Bacillus amyloliquefaciens subsp. plantarum)).